We begin with the raw amino-acid sequence, 965 residues long: Aminopeptidase N (965 aa).

The Cytoplasmic portion of the chain corresponds to 2–8 (AKGFYIS). A helical; Signal-anchor for type II membrane protein membrane pass occupies residues 9 to 32 (KTLGILGILLGVAAVCTIIALSVV). Residues 33-68 (YAQEKNRNAENSAIAPTLPGSTSATTSTTNPAIDES) form a cytosolic Ser/Thr-rich junction region. Residues 33-965 (YAQEKNRNAE…VVLKWFTENS (933 aa)) are Extracellular-facing. A disordered region spans residues 44–68 (SAIAPTLPGSTSATTSTTNPAIDES). A compositionally biased stretch (low complexity) spans 47-64 (APTLPGSTSATTSTTNPA). The tract at residues 69 to 965 (KPWNQYRLPK…VVLKWFTENS (897 aa)) is metalloprotease. Residues Asn-114 and Asn-128 are each glycosylated (N-linked (GlcNAc...) asparagine). Tyr-176 carries the post-translational modification Sulfotyrosine. N-linked (GlcNAc...) asparagine glycans are attached at residues Asn-234, Asn-242, and Asn-264. 351–355 (GAMEN) provides a ligand contact to substrate. His-387 is a Zn(2+) binding site. Glu-388 serves as the catalytic Proton acceptor. Residues His-391 and Glu-410 each contribute to the Zn(2+) site. Asn-555, Asn-606, and Asn-624 each carry an N-linked (GlcNAc...) asparagine glycan. Cysteines 760 and 767 form a disulfide. Residue Asn-780 is glycosylated (N-linked (GlcNAc...) asparagine). Cys-797 and Cys-833 form a disulfide bridge. The residue at position 852 (Tyr-852) is a Phosphotyrosine.

It belongs to the peptidase M1 family. As to quaternary structure, homodimer. Interacts with SLC6A19. It depends on Zn(2+) as a cofactor. Post-translationally, sulfated. N- and O-glycosylated. In terms of processing, may undergo proteolysis and give rise to a soluble form. Widely distributed throughout the CNS. Particularly abundant in kidney and intestinal microvilli, also detected in lung and liver. Weakly expressed in heart and aorta.

The protein localises to the cell membrane. It catalyses the reaction Release of an N-terminal amino acid, Xaa-|-Yaa- from a peptide, amide or arylamide. Xaa is preferably Ala, but may be most amino acids including Pro (slow action). When a terminal hydrophobic residue is followed by a prolyl residue, the two may be released as an intact Xaa-Pro dipeptide.. In terms of biological role, broad specificity aminopeptidase which plays a role in the final digestion of peptides generated from hydrolysis of proteins by gastric and pancreatic proteases. Also involved in the processing of various peptides including peptide hormones, such as angiotensin III and IV, neuropeptides, and chemokines. May also be involved the cleavage of peptides bound to major histocompatibility complex class II molecules of antigen presenting cells. May have a role in angiogenesis and promote cholesterol crystallization. May have a role in amino acid transport by acting as binding partner of amino acid transporter SLC6A19 and regulating its activity. The protein is Aminopeptidase N (Anpep) of Rattus norvegicus (Rat).